A 320-amino-acid chain; its full sequence is GDSL esterase/lipase At3g43570 (320 aa).

The first 19 residues, 1–19 (MKIQIIWLTLVLIVVEANA), serve as a signal peptide directing secretion. A glycan (N-linked (GlcNAc...) asparagine) is linked at Asn-25. The Nucleophile role is filled by Ser-37. The N-linked (GlcNAc...) asparagine glycan is linked to Asn-287. Catalysis depends on residues Asp-295 and His-298.

The protein belongs to the 'GDSL' lipolytic enzyme family.

Its subcellular location is the secreted. The protein is GDSL esterase/lipase At3g43570 of Arabidopsis thaliana (Mouse-ear cress).